Here is a 222-residue protein sequence, read N- to C-terminus: Putative metal transport protein MJ1569 (222 aa).

Helical transmembrane passes span 3 to 23 (IPDG…MIPI), 39 to 59 (LPLL…NLPV), 81 to 101 (WVAT…FGDG), 102 to 122 (GITC…FVGY), 135 to 155 (VIAS…VAGF), and 180 to 200 (AFAH…IVVW).

Belongs to the CbiM family.

It is found in the cell membrane. In terms of biological role, may be involved in metal transport. This chain is Putative metal transport protein MJ1569, found in Methanocaldococcus jannaschii (strain ATCC 43067 / DSM 2661 / JAL-1 / JCM 10045 / NBRC 100440) (Methanococcus jannaschii).